Reading from the N-terminus, the 29-residue chain is Glucagon (29 aa).

The protein belongs to the glucagon family.

It is found in the secreted. Glucagon plays a key role in glucose metabolism and homeostasis. Regulates blood glucose by increasing gluconeogenesis and decreasing glycolysis. The chain is Glucagon (gcg) from Callorhinchus milii (Ghost shark).